Reading from the N-terminus, the 461-residue chain is Transcription factor GTE3, chloroplastic (461 aa).

Positions 1-11 (MASGPIAGGGV) are enriched in gly residues. The tract at residues 1–41 (MASGPIAGGGVSKTKHKWSDSGNKSQKRSKPTVANSNSLGL) is disordered. The N-terminal 51 residues, 1-51 (MASGPIAGGGVSKTKHKWSDSGNKSQKRSKPTVANSNSLGLEDNHQMMKIS), are a transit peptide targeting the chloroplast. Residues 114–220 (KGTVQILKSC…NLFEEKWVPL (107 aa)) form the Bromo domain. Residues 298 to 379 (LVEEASANRD…EYKESLSKKK (82 aa)) form the NET domain. The span at 376–392 (SKKKEEQGLDSERDAES) shows a compositional bias: basic and acidic residues. The interval 376 to 461 (SKKKEEQGLD…SSGHESDTGN (86 aa)) is disordered. Positions 393–412 (FHNSVHESNTLVTGLESSKV) are enriched in polar residues. Positions 429–451 (GGSSSSNSSSSGSGSGSSGSDSD) are enriched in low complexity. The segment covering 452-461 (SSGHESDTGN) has biased composition (basic and acidic residues).

As to quaternary structure, interacts with SIZ1 (via PHD domain). Sumoylated by SIZ1. Sumoylation reduces capacity to bind to acetylated histone H3.

Its subcellular location is the plastid. It localises to the chloroplast. Functionally, probable transcription factor that binds to acetylated histone H3. The chain is Transcription factor GTE3, chloroplastic (GTE3) from Arabidopsis thaliana (Mouse-ear cress).